We begin with the raw amino-acid sequence, 256 residues long: uncharacterized protein (256 aa).

2 consecutive transmembrane segments (helical) span residues Cys181–Val201 and Gly231–Ala251.

It is found in the cell membrane. This is an uncharacterized protein from Methanocaldococcus jannaschii (strain ATCC 43067 / DSM 2661 / JAL-1 / JCM 10045 / NBRC 100440) (Methanococcus jannaschii).